Consider the following 210-residue polypeptide: Large ribosomal subunit protein uL3 (210 aa).

The protein belongs to the universal ribosomal protein uL3 family. In terms of assembly, part of the 50S ribosomal subunit. Forms a cluster with proteins L14 and L19.

In terms of biological role, one of the primary rRNA binding proteins, it binds directly near the 3'-end of the 23S rRNA, where it nucleates assembly of the 50S subunit. The sequence is that of Large ribosomal subunit protein uL3 from Amoebophilus asiaticus (strain 5a2).